The following is a 488-amino-acid chain: N-succinylglutamate 5-semialdehyde dehydrogenase (488 aa).

221–226 lines the NAD(+) pocket; it reads GSSRTG. Catalysis depends on residues Glu244 and Cys278.

The protein belongs to the aldehyde dehydrogenase family. AstD subfamily.

The enzyme catalyses N-succinyl-L-glutamate 5-semialdehyde + NAD(+) + H2O = N-succinyl-L-glutamate + NADH + 2 H(+). The protein operates within amino-acid degradation; L-arginine degradation via AST pathway; L-glutamate and succinate from L-arginine: step 4/5. Functionally, catalyzes the NAD-dependent reduction of succinylglutamate semialdehyde into succinylglutamate. The chain is N-succinylglutamate 5-semialdehyde dehydrogenase from Pseudomonas fluorescens (strain ATCC BAA-477 / NRRL B-23932 / Pf-5).